A 235-amino-acid chain; its full sequence is NifU-like protein 2, chloroplastic (235 aa).

A chloroplast-targeting transit peptide spans 1–16 (MQLLTLNPAAISRTPP).

The protein belongs to the NifU family. In terms of assembly, homodimer; disulfide-linked. [2Fe-2S] cluster is required as a cofactor. Predominantly expressed in leaves and floral stalks. Ubiquitous (at protein level).

The protein resides in the plastid. Its subcellular location is the chloroplast stroma. Its function is as follows. Molecular scaffold for [Fe-S] cluster assembly of chloroplastic iron-sulfur proteins. Required for biogenesis of ferredoxin, a major photosynthetic electron carrier containing [2Fe-2S] cluster. Required for the assembly of photosystem I complex. This is NifU-like protein 2, chloroplastic (NIFU2) from Arabidopsis thaliana (Mouse-ear cress).